A 1043-amino-acid polypeptide reads, in one-letter code: Isoleucine--tRNA ligase (1043 aa).

Residues 49–59 (PFATGLPHYGH) carry the 'HIGH' region motif. The 'KMSKS' region signature appears at 592 to 596 (KMSKR). Position 595 (Lys-595) interacts with ATP.

Belongs to the class-I aminoacyl-tRNA synthetase family. IleS type 2 subfamily. In terms of assembly, monomer. It depends on Zn(2+) as a cofactor.

It is found in the cytoplasm. It carries out the reaction tRNA(Ile) + L-isoleucine + ATP = L-isoleucyl-tRNA(Ile) + AMP + diphosphate. Functionally, catalyzes the attachment of isoleucine to tRNA(Ile). As IleRS can inadvertently accommodate and process structurally similar amino acids such as valine, to avoid such errors it has two additional distinct tRNA(Ile)-dependent editing activities. One activity is designated as 'pretransfer' editing and involves the hydrolysis of activated Val-AMP. The other activity is designated 'posttransfer' editing and involves deacylation of mischarged Val-tRNA(Ile). The protein is Isoleucine--tRNA ligase of Chlamydia abortus (strain DSM 27085 / S26/3) (Chlamydophila abortus).